The primary structure comprises 268 residues: MERYESLFAQLKERKEGAFVPFVTLGDPGIEQSLKIIDTLIEAGADALELGIPFSDPLADGPTIQNATLRAFAAGVTPAQCFEMLALIRQKHPTIPIGLLMYANLVFNKGIDEFYAECEKVGVDSVLVADVPVEESAPFRQAALRHNVAPIFICPPNADDDLLRQIASYGRGYTYLLSRAGVTGAENRAALPLNHLVAKLKEYNAAPPLQGFGISAPDQVKAAIDAGAAGAISGSAIVKIIEQHINEPEKMLAALKAFVQPMKAATRS.

Residues Glu-49 and Asp-60 each act as proton acceptor in the active site.

The protein belongs to the TrpA family. As to quaternary structure, tetramer of two alpha and two beta chains.

The enzyme catalyses (1S,2R)-1-C-(indol-3-yl)glycerol 3-phosphate + L-serine = D-glyceraldehyde 3-phosphate + L-tryptophan + H2O. It functions in the pathway amino-acid biosynthesis; L-tryptophan biosynthesis; L-tryptophan from chorismate: step 5/5. Functionally, the alpha subunit is responsible for the aldol cleavage of indoleglycerol phosphate to indole and glyceraldehyde 3-phosphate. This is Tryptophan synthase alpha chain from Escherichia coli O6:H1 (strain CFT073 / ATCC 700928 / UPEC).